The sequence spans 445 residues: Tubulin beta-1 chain (445 aa).

Residues Gln-11, Glu-69, Ser-138, Gly-142, Thr-143, Gly-144, Asn-204, and Asn-226 each contribute to the GTP site. Glu-69 is a binding site for Mg(2+). The tract at residues 422 to 445 is disordered; the sequence is QYQDAGMDDEYGEEYEDEAPAEEE. Acidic residues predominate over residues 427 to 445; sequence GMDDEYGEEYEDEAPAEEE.

The protein belongs to the tubulin family. As to quaternary structure, dimer of alpha and beta chains. A typical microtubule is a hollow water-filled tube with an outer diameter of 25 nm and an inner diameter of 15 nM. Alpha-beta heterodimers associate head-to-tail to form protofilaments running lengthwise along the microtubule wall with the beta-tubulin subunit facing the microtubule plus end conferring a structural polarity. Microtubules usually have 13 protofilaments but different protofilament numbers can be found in some organisms and specialized cells. The cofactor is Mg(2+).

The protein resides in the cytoplasm. Its subcellular location is the cytoskeleton. Tubulin is the major constituent of microtubules, a cylinder consisting of laterally associated linear protofilaments composed of alpha- and beta-tubulin heterodimers. Microtubules grow by the addition of GTP-tubulin dimers to the microtubule end, where a stabilizing cap forms. Below the cap, tubulin dimers are in GDP-bound state, owing to GTPase activity of alpha-tubulin. This is Tubulin beta-1 chain (TUB1) from Colletotrichum graminicola (Maize anthracnose fungus).